The sequence spans 424 residues: MLDLKYVRANLDAVKTALANRNQETLLAGFEDLEAGRRTVLAEVEELRRKRNEVSGTIAVMKREGKDAADLMADMKEVSGKIKDLESGLKEKEEALNELLMRIPNIPHESVPVGKDENDNVEVKRRGEPRNFDFEPQAHWDIGEGLGILDFERAARITGSRFPLYFGDGALMERALINFMLMTHTTRHGYKEVLPPFIVNRKTMTGTGQLPKFEEDLFKLEGWEYFLIPTAEVPVTNIHAEEILEEEALPLYYTAFTPCFRSEAGSAGKDTRGLIRQHQFNKVEMVKFSHPDNSYDELEGMLQNAETILQELGLPYRVLNLCTGDIGFGAAKTYDLEVWMPQQGVYREISSCSNCEDFQARRANIRFKSKGKKGTSHVHTLNGSGLAVGRSLAAILENYQQADGSVIIPEVLRPFMGGREVIEK.

230–232 is an L-serine binding site; it reads TAE. ATP is bound at residue 261–263; it reads RSE. E284 provides a ligand contact to L-serine. 348 to 351 serves as a coordination point for ATP; that stretch reads EISS. Residue S384 participates in L-serine binding.

It belongs to the class-II aminoacyl-tRNA synthetase family. Type-1 seryl-tRNA synthetase subfamily. Homodimer. The tRNA molecule binds across the dimer.

The protein resides in the cytoplasm. The catalysed reaction is tRNA(Ser) + L-serine + ATP = L-seryl-tRNA(Ser) + AMP + diphosphate + H(+). It carries out the reaction tRNA(Sec) + L-serine + ATP = L-seryl-tRNA(Sec) + AMP + diphosphate + H(+). The protein operates within aminoacyl-tRNA biosynthesis; selenocysteinyl-tRNA(Sec) biosynthesis; L-seryl-tRNA(Sec) from L-serine and tRNA(Sec): step 1/1. Its function is as follows. Catalyzes the attachment of serine to tRNA(Ser). Is also able to aminoacylate tRNA(Sec) with serine, to form the misacylated tRNA L-seryl-tRNA(Sec), which will be further converted into selenocysteinyl-tRNA(Sec). In Desulfatibacillum aliphaticivorans, this protein is Serine--tRNA ligase.